The primary structure comprises 159 residues: Large ribosomal subunit protein uL11 (159 aa).

This sequence belongs to the universal ribosomal protein uL11 family. As to quaternary structure, part of the ribosomal stalk of the 50S ribosomal subunit. Interacts with L10 and the large rRNA to form the base of the stalk. L10 forms an elongated spine to which L12 dimers bind in a sequential fashion forming a multimeric L10(L12)X complex.

Functionally, forms part of the ribosomal stalk which helps the ribosome interact with GTP-bound translation factors. The polypeptide is Large ribosomal subunit protein uL11 (Methanococcus vannielii (strain ATCC 35089 / DSM 1224 / JCM 13029 / OCM 148 / SB)).